Here is a 561-residue protein sequence, read N- to C-terminus: Cytochrome P450 monooxygenase avaL (561 aa).

A helical membrane pass occupies residues Ile19–Leu39. Cys508 is a binding site for heme.

It belongs to the cytochrome P450 family. It depends on heme as a cofactor.

It is found in the membrane. The protein operates within secondary metabolite biosynthesis. Cytochrome P450 monooxygenase; part of the cluster that mediates the biosynthesis of a highly modified cyclo-arginine-tryptophan dipeptide (cRW). The first step of the pathway is perfornmed by the arginine-containing cyclodipeptide synthase (RCPDS) avaA that acts as the scaffold-generating enzyme and is responsible for formation of the cyclo-Arg-Trp (cRW) diketopiperazine. AvaB then acts as a multifunctional flavoenzyme that is responsible for generating the cyclo-Arg-formylkynurenine DKP, which can be deformylated by avaC. AvaB then further catalyzes an additional N-oxidation followed by cyclization and dehydration. The next step is an N-acetylation of the guanidine group catalyzed by the arginine N-acetyltransferase avaD. The roles of the additional enzymes identified within the ava cluster still have to be determined. This Aspergillus versicolor protein is Cytochrome P450 monooxygenase avaL.